The primary structure comprises 113 residues: Crustacean hyperglycemic hormones B (113 aa).

A signal peptide spans 1–26; it reads MVAFRMMSMALLVVVASSWWASPVEA. Intrachain disulfides connect cysteine 46/cysteine 82, cysteine 62/cysteine 78, and cysteine 65/cysteine 91. Residue valine 111 is modified to Valine amide.

Belongs to the arthropod CHH/MIH/GIH/VIH hormone family. As to expression, expressed at a constant level in the eyestalks of juveniles and mature females. A low level expression is seen in the central nervous system.

The protein resides in the secreted. Functionally, hormone found in the sinus gland of isopods and decapods which controls the blood sugar level. Has a secretagogue action over the amylase released from the midgut gland. May act as a stress hormone and may be involved in the control of molting and reproduction. The polypeptide is Crustacean hyperglycemic hormones B (Metapenaeus ensis (Greasyback shrimp)).